The sequence spans 360 residues: Phospho-N-acetylmuramoyl-pentapeptide-transferase (360 aa).

10 consecutive transmembrane segments (helical) span residues 21 to 41 (YLSF…LWMG), 73 to 93 (TMGG…WANL), 94 to 114 (SNPY…VGFV), 132 to 152 (WKYF…YAYG), 168 to 188 (VMPQ…VGTS), 199 to 219 (GLAI…AWAT), 236 to 256 (ASEL…FLWF), 263 to 283 (VFMG…IAVL), 288 to 308 (LVLV…ILQV), and 338 to 358 (VIVR…ATLK).

It belongs to the glycosyltransferase 4 family. MraY subfamily. Mg(2+) is required as a cofactor.

It is found in the cell inner membrane. The enzyme catalyses UDP-N-acetyl-alpha-D-muramoyl-L-alanyl-gamma-D-glutamyl-meso-2,6-diaminopimeloyl-D-alanyl-D-alanine + di-trans,octa-cis-undecaprenyl phosphate = di-trans,octa-cis-undecaprenyl diphospho-N-acetyl-alpha-D-muramoyl-L-alanyl-D-glutamyl-meso-2,6-diaminopimeloyl-D-alanyl-D-alanine + UMP. The protein operates within cell wall biogenesis; peptidoglycan biosynthesis. Catalyzes the initial step of the lipid cycle reactions in the biosynthesis of the cell wall peptidoglycan: transfers peptidoglycan precursor phospho-MurNAc-pentapeptide from UDP-MurNAc-pentapeptide onto the lipid carrier undecaprenyl phosphate, yielding undecaprenyl-pyrophosphoryl-MurNAc-pentapeptide, known as lipid I. The sequence is that of Phospho-N-acetylmuramoyl-pentapeptide-transferase from Vibrio vulnificus (strain YJ016).